Here is an 88-residue protein sequence, read N- to C-terminus: Small ribosomal subunit protein bS16c (88 aa).

It belongs to the bacterial ribosomal protein bS16 family.

Its subcellular location is the plastid. The protein localises to the chloroplast. The chain is Small ribosomal subunit protein bS16c from Sinapis alba (White mustard).